We begin with the raw amino-acid sequence, 483 residues long: MGIINGKEFIDRLNKLENEIWYDGEKIKGNISEHPAFKGIIKTKSSLYELQTKDELIHEMTYCLPGDHNRIGLSYLQPKTKNDLKKRRTMIEHWARHTHGMMGRSPDYMNTVMMSFASSAELLKDKENCFPEHILDMYEQAAKHDLSFTHTFITPQVNRSQSYFGLSEKPISAKVIDRTEKGLMIHGARLLATQGGLTDEILVFSAPKFFFETDEAYAFSIPSNTKGVKFITRESFVLSDSSFNHPLSSRYEEMDSIVVFDHVLVPWNRVFFYDNVEAAKDFMTKSSFHAFTFHQVVIRQMIKIEFLLGVAQLLVDTINVSEYQHIQEKLSEIIVGLETIKALIDKSENDAQLDEFGYMRPCLIPLQVISTIIPKLYPRFTEIIQLIGASGMVTLPTENAFDSEIREDLDQYLQATNTNAEERVKIFRLAWDLTMSSFGTRQTHYERYFFGDPIRISSRLYTSYPKQEQLNMIKTFLHADTEH.

Substrate-binding positions include 104 to 108 (RSPDY) and His150. Residues 150–152 (HTF), 156–159 (QVNR), and Thr193 each bind FAD. A substrate-binding site is contributed by 206 to 207 (AP). 452–455 (DPIR) is a binding site for FAD.

Belongs to the FADH(2)-utilizing monooxygenase family.

The enzyme catalyses 4-hydroxyphenylacetate + FADH2 + O2 = 3,4-dihydroxyphenylacetate + FAD + H2O + H(+). It participates in aromatic compound metabolism; 4-hydroxyphenylacetate degradation; pyruvate and succinate semialdehyde from 4-hydroxyphenylacetate: step 1/7. Functionally, catalyzes the hydroxylation of 4-hydroxyphenylacetic acid (4HPA), leading to the production of 3,4-dihydroxyphenylacetic acid (DHPA). This Bacillus subtilis (strain 168) protein is Probable 4-hydroxyphenylacetate 3-monooxygenase (yoaI).